The sequence spans 199 residues: Peptidyl-tRNA hydrolase (199 aa).

Position 15 (Tyr15) interacts with tRNA. Catalysis depends on His20, which acts as the Proton acceptor. Positions 66, 68, and 114 each coordinate tRNA.

This sequence belongs to the PTH family. As to quaternary structure, monomer.

It localises to the cytoplasm. The catalysed reaction is an N-acyl-L-alpha-aminoacyl-tRNA + H2O = an N-acyl-L-amino acid + a tRNA + H(+). In terms of biological role, hydrolyzes ribosome-free peptidyl-tRNAs (with 1 or more amino acids incorporated), which drop off the ribosome during protein synthesis, or as a result of ribosome stalling. Functionally, catalyzes the release of premature peptidyl moieties from peptidyl-tRNA molecules trapped in stalled 50S ribosomal subunits, and thus maintains levels of free tRNAs and 50S ribosomes. In Burkholderia cenocepacia (strain HI2424), this protein is Peptidyl-tRNA hydrolase.